A 292-amino-acid chain; its full sequence is Undecaprenyl-diphosphatase (292 aa).

5 consecutive transmembrane segments (helical) span residues 87–107 (MGWY…LFEE), 113–133 (FRDL…LGMV), 190–210 (AFLL…KDIG), 219–239 (ATIV…AWFM), and 250–270 (FVYY…FGVL).

The protein belongs to the UppP family.

It is found in the cell membrane. It carries out the reaction di-trans,octa-cis-undecaprenyl diphosphate + H2O = di-trans,octa-cis-undecaprenyl phosphate + phosphate + H(+). Functionally, catalyzes the dephosphorylation of undecaprenyl diphosphate (UPP). Confers resistance to bacitracin. The polypeptide is Undecaprenyl-diphosphatase (Thermobifida fusca (strain YX)).